A 184-amino-acid chain; its full sequence is NADH-quinone oxidoreductase subunit B 2 (184 aa).

[4Fe-4S] cluster contacts are provided by Cys-59, Cys-60, Cys-125, and Cys-153.

This sequence belongs to the complex I 20 kDa subunit family. As to quaternary structure, NDH-1 is composed of 14 different subunits. Subunits NuoB, C, D, E, F, and G constitute the peripheral sector of the complex. [4Fe-4S] cluster is required as a cofactor.

It is found in the cell inner membrane. The enzyme catalyses a quinone + NADH + 5 H(+)(in) = a quinol + NAD(+) + 4 H(+)(out). Functionally, NDH-1 shuttles electrons from NADH, via FMN and iron-sulfur (Fe-S) centers, to quinones in the respiratory chain. Couples the redox reaction to proton translocation (for every two electrons transferred, four hydrogen ions are translocated across the cytoplasmic membrane), and thus conserves the redox energy in a proton gradient. This chain is NADH-quinone oxidoreductase subunit B 2, found in Solibacter usitatus (strain Ellin6076).